We begin with the raw amino-acid sequence, 344 residues long: Beta-hexosaminidase (344 aa).

Substrate-binding positions include Asp-60, Arg-68, Arg-132, and 162–163; that span reads KH. The active-site Proton donor/acceptor is His-175. Asp-247 functions as the Nucleophile in the catalytic mechanism.

The protein belongs to the glycosyl hydrolase 3 family. NagZ subfamily.

The protein localises to the cytoplasm. The enzyme catalyses Hydrolysis of terminal non-reducing N-acetyl-D-hexosamine residues in N-acetyl-beta-D-hexosaminides.. Its pathway is cell wall biogenesis; peptidoglycan recycling. Plays a role in peptidoglycan recycling by cleaving the terminal beta-1,4-linked N-acetylglucosamine (GlcNAc) from peptide-linked peptidoglycan fragments, giving rise to free GlcNAc, anhydro-N-acetylmuramic acid and anhydro-N-acetylmuramic acid-linked peptides. In Haemophilus ducreyi (strain 35000HP / ATCC 700724), this protein is Beta-hexosaminidase.